The primary structure comprises 735 residues: Serine/threonine-protein kinase BRSK2 (735 aa).

A Protein kinase domain is found at 20 to 271 (YRLEKTLGKG…LEHIQKHIWY (252 aa)). ATP-binding positions include 26–34 (LGKGQTGLV) and K49. The active-site Proton acceptor is the D142. T175 carries the phosphothreonine; by LKB1 modification. A Phosphothreonine; by PKA modification is found at T261. At S295 the chain carries Phosphoserine. A UBA domain is found at 298–340 (DIDPDVLDSMHSLGCFRDRNKLLQDLLSEEENQEKMIYFLLLD). Residues 346–367 (PSHEDEDLPPRNEIDPPRKRVD) show a composition bias toward basic and acidic residues. 3 disordered regions span residues 346-476 (PSHE…GVPW), 493-514 (FHRRKLQVPTPEEMSNLTPESS), and 682-735 (KNGQ…REQP). Phosphoserine occurs at positions 368, 383, 394, 413, 417, 424, and 428. The segment covering 411–429 (SRSISGASSGLSTSPLSSP) has biased composition (low complexity). Over residues 432-446 (TPHPSPRGSPLPTPK) the composition is skewed to pro residues. Phosphoserine is present on S456. Phosphothreonine is present on residues T460, T464, and T510. Residues S513 and S514 each carry the phosphoserine modification.

Belongs to the protein kinase superfamily. CAMK Ser/Thr protein kinase family. SNF1 subfamily. As to quaternary structure, interacts with FZR1, a regulatory subunit of the APC ubiquitin ligase complex. Interacts with COPS5. Interacts with PAK1. Requires Mg(2+) as cofactor. In terms of processing, may be phosphorylated at Thr-261 by PKA. Phosphorylated at Thr-175 by STK11/LKB1 in complex with STE20-related adapter-alpha (STRADA) pseudo kinase and CAB39. Not phosphorylated at Thr-175 by CaMKK2. In contrast, it is phosphorylated and activated by CaMKK1. May be inactivated via dephosphorylation of Thr-175 by PP2C. Polyubiquitinated by the APC complex in conjunction with FZR1, leading to its proteasomal degradation. Targeted for proteasomal degradation by interaction with COPS5. BRSK2 levels change during the cell cycle. BRSK2 levels are low at the G1/S boundary and gradually increase as cells progress into G2 phase. BRSK2 levels decrease rapidly at the end of mitosis.

It localises to the cytoplasm. The protein resides in the cytoskeleton. Its subcellular location is the microtubule organizing center. It is found in the centrosome. The protein localises to the perinuclear region. It localises to the endoplasmic reticulum. The enzyme catalyses L-seryl-[protein] + ATP = O-phospho-L-seryl-[protein] + ADP + H(+). It carries out the reaction L-threonyl-[protein] + ATP = O-phospho-L-threonyl-[protein] + ADP + H(+). The catalysed reaction is L-seryl-[tau protein] + ATP = O-phospho-L-seryl-[tau protein] + ADP + H(+). It catalyses the reaction L-threonyl-[tau protein] + ATP = O-phospho-L-threonyl-[tau protein] + ADP + H(+). Its activity is regulated as follows. Activated by phosphorylation on Thr-175 by STK11/LKB1. Its function is as follows. Serine/threonine-protein kinase that plays a key role in polarization of neurons and axonogenesis, cell cycle progress and insulin secretion. Phosphorylates CDK16, CDC25C, MAPT/TAU, PAK1 and WEE1. Following phosphorylation and activation by STK11/LKB1, acts as a key regulator of polarization of cortical neurons, probably by mediating phosphorylation of microtubule-associated proteins such as MAPT/TAU at 'Thr-523' and 'Ser-573'. Also regulates neuron polarization by mediating phosphorylation of WEE1 at 'Ser-642' in post-mitotic neurons, leading to down-regulate WEE1 activity in polarized neurons. Plays a role in the regulation of the mitotic cell cycle progress and the onset of mitosis. Plays a role in the regulation of insulin secretion in response to elevated glucose levels, probably via phosphorylation of CDK16 and PAK1. While BRSK2 phosphorylated at Thr-175 can inhibit insulin secretion, BRSK2 phosphorylated at Thr-261 can promote insulin secretion. Regulates reorganization of the actin cytoskeleton. May play a role in the apoptotic response triggered by endoplasmic reticulum (ER) stress. The protein is Serine/threonine-protein kinase BRSK2 (Brsk2) of Rattus norvegicus (Rat).